The following is a 142-amino-acid chain: Complexin (142 aa).

Disordered stretches follow at residues 13-70 and 83-105; these read QLSA…MRQD and IVEA…PEEL. Residues 29–138 adopt a coiled-coil conformation; it reads GDDKEKAEEE…NELKTQIEGK (110 aa). A compositionally biased stretch (basic and acidic residues) spans 31–70; it reads DKEKAEEEERERQEAIKEAEDRRKEKHRKMEEEREKMRQD. Cysteine methyl ester is present on cysteine 139. Cysteine 139 carries S-farnesyl cysteine lipidation. Positions 140–142 are cleaved as a propeptide — removed in mature form; sequence VMQ.

This sequence belongs to the complexin/synaphin family. Binds to the SNARE core complex containing Snap25, synaptobrevin and Syx1A.

It is found in the membrane. Its function is as follows. Positively regulates a late step in synaptic vesicle exocytosis. The protein is Complexin (cpx) of Drosophila melanogaster (Fruit fly).